Reading from the N-terminus, the 124-residue chain is Large ribosomal subunit protein mL51 (124 aa).

A mitochondrion-targeting transit peptide spans 1–31; it reads MSVFGGLWRSAVNLCQSSRLFSTGSCARIRM.

It belongs to the mitochondrion-specific ribosomal protein mL51 family. In terms of assembly, component of the mitochondrial ribosome large subunit (39S) which comprises a 16S rRNA and about 50 distinct proteins.

It localises to the mitochondrion. This is Large ribosomal subunit protein mL51 (mrpl51) from Danio rerio (Zebrafish).